Here is a 249-residue protein sequence, read N- to C-terminus: 2,3-bisphosphoglycerate-dependent phosphoglycerate mutase (249 aa).

Substrate-binding positions include Arg11–Asn18, Thr24–Gly25, Arg63, Glu90–Tyr93, Lys101, and Arg117–Arg118. The active-site Tele-phosphohistidine intermediate is His12. Glu90 acts as the Proton donor/acceptor in catalysis. A disordered region spans residues Ser119–Asp138. Residue Gly184–Asn185 participates in substrate binding.

The protein belongs to the phosphoglycerate mutase family. BPG-dependent PGAM subfamily.

The enzyme catalyses (2R)-2-phosphoglycerate = (2R)-3-phosphoglycerate. Its pathway is carbohydrate degradation; glycolysis; pyruvate from D-glyceraldehyde 3-phosphate: step 3/5. Its function is as follows. Catalyzes the interconversion of 2-phosphoglycerate and 3-phosphoglycerate. The protein is 2,3-bisphosphoglycerate-dependent phosphoglycerate mutase of Mycolicibacterium paratuberculosis (strain ATCC BAA-968 / K-10) (Mycobacterium paratuberculosis).